Reading from the N-terminus, the 68-residue chain is MMSKLGVLVTICLLLFPLTALPLDGDQPADHPAKRTQDHNLASPISAWIDPSHYCCCGGGCTDDCVNC.

The N-terminal stretch at 1–20 (MMSKLGVLVTICLLLFPLTA) is a signal peptide. Positions 21–47 (LPLDGDQPADHPAKRTQDHNLASPISA) are excised as a propeptide. Cystine bridges form between Cys-55–Cys-68, Cys-56–Cys-61, and Cys-57–Cys-65.

The protein belongs to the conotoxin M superfamily. In terms of tissue distribution, expressed by the venom duct.

The protein resides in the secreted. Functionally, in vivo, elicits a series of symptoms, such as being sedative, tail stiffening and twisted jumping, when injected intracranially into mice. The polypeptide is Conotoxin Vx2 (Conus vexillum (Flag cone)).